The chain runs to 100 residues: MGTRFLLALFLVLLVLGFEVQGAQLPQQDEPSSPTLLTQMQESLSSYWDSAKEAARGLYEKTYLPTVDEKLRDMYSKSTAAVSTYAGIFTDQLLTLLKGD.

Positions M1–G22 are cleaved as a signal peptide. The interval T66 to M74 is lipid binding. Residues S78–D100 form a lipoprotein lipase cofactor region.

Belongs to the apolipoprotein C2 family. In terms of processing, proapolipoprotein C-II is synthesized as a sialic acid containing glycoprotein which is subsequently desialylated prior to its proteolytic processing. Post-translationally, proapolipoprotein C-II, the major form found in plasma undergoes proteolytic cleavage of its N-terminal hexapeptide to generate apolipoprotein C-II, which occurs as the minor form in plasma.

Its subcellular location is the secreted. Its function is as follows. Component of chylomicrons, very low-density lipoproteins (VLDL), low-density lipoproteins (LDL), and high-density lipoproteins (HDL) in plasma. Plays an important role in lipoprotein metabolism as an activator of lipoprotein lipase. Both proapolipoprotein C-II and apolipoprotein C-II can activate lipoprotein lipase. The chain is Apolipoprotein C-II (APOC2) from Otolemur garnettii (Small-eared galago).